A 458-amino-acid chain; its full sequence is MTSKADYLKKYLSPASGDIEKKKKKKNKDKNKPSGLRLIEEDAFLSVDAAKTRDIGSDEEREEIEVLKQSVKKAKVVHGFKQTFAEVDAPKVIKPEPLSPDNSPPRGKRQRHDSDNSPPRPSRKRNDSDNSPPRPSRNRHDSDKDNSPPRRRRHDSDNSPPRPSRKIREESPSARNRRSPPRTRRDRHDSDNSPPRNRSRRDSDNSPPRRRPSSPARRRKDDDLSPPRKSRKIEEPKKIKKEEPDSDTETSGRTLEGKRSGLQSARDLKEESDKLRAKNSKMFEEMDTSVSGRFADTVYRQKQTKKKGKDSEEDQAKKERETKKTEELKEKYKSWNKGVAQIEDRRAQLEEMARVAAEPMARARDDDAMNAHLKEVLHAADPMANMIQKKRRDTAIDRGELVYPSYHGHFVPNRFGIAPGYRWDGVDRSNGFEGKLAKTENTKTANQSEYYKSIAEYE.

Disordered stretches follow at residues 16 to 37 (SGDIEKKKKKKNKDKNKPSGLR), 81 to 328 (KQTF…TEEL), and 437 to 458 (AKTENTKTANQSEYYKSIAEYE). The segment covering 138–148 (NRHDSDKDNSP) has biased composition (basic and acidic residues). Basic residues-rich tracts occupy residues 175–185 (RNRRSPPRTRR) and 208–218 (PRRRPSSPARR). 3 stretches are compositionally biased toward basic and acidic residues: residues 219–243 (RKDDDLSPPRKSRKIEEPKKIKKEE), 266–284 (RDLKEESDKLRAKNSKMFE), and 314–328 (DQAKKERETKKTEEL). Residues 262 to 356 (LQSARDLKEE…AQLEEMARVA (95 aa)) are a coiled coil.

The protein belongs to the CWC26 family.

The sequence is that of BUD13 homolog from Caenorhabditis elegans.